Consider the following 142-residue polypeptide: Small ribosomal subunit protein uS12 (142 aa).

Positions 1 to 43 (MPTFNQLVRKGRKVIEKKSNSPALQKGFNSKKKKPTDVNSPQK) are disordered. 3-methylthioaspartic acid is present on Asp-102.

This sequence belongs to the universal ribosomal protein uS12 family. In terms of assembly, part of the 30S ribosomal subunit. Contacts proteins S8 and S17. May interact with IF1 in the 30S initiation complex.

With S4 and S5 plays an important role in translational accuracy. In terms of biological role, interacts with and stabilizes bases of the 16S rRNA that are involved in tRNA selection in the A site and with the mRNA backbone. Located at the interface of the 30S and 50S subunits, it traverses the body of the 30S subunit contacting proteins on the other side and probably holding the rRNA structure together. The combined cluster of proteins S8, S12 and S17 appears to hold together the shoulder and platform of the 30S subunit. In Ruminiclostridium cellulolyticum (strain ATCC 35319 / DSM 5812 / JCM 6584 / H10) (Clostridium cellulolyticum), this protein is Small ribosomal subunit protein uS12.